Consider the following 385-residue polypeptide: S-adenosylmethionine synthase (385 aa).

Residue H16 coordinates ATP. D18 is a binding site for Mg(2+). E44 serves as a coordination point for K(+). L-methionine is bound by residues E57 and Q100. Residues 100–110 (QSPDINQGVDR) form a flexible loop region. ATP contacts are provided by residues 164 to 166 (DGK), 230 to 231 (KF), D239, 245 to 246 (RK), A262, and K266. Residue D239 participates in L-methionine binding. K270 serves as a coordination point for L-methionine.

The protein belongs to the AdoMet synthase family. Homotetramer; dimer of dimers. Mg(2+) serves as cofactor. Requires K(+) as cofactor.

The protein resides in the cytoplasm. The catalysed reaction is L-methionine + ATP + H2O = S-adenosyl-L-methionine + phosphate + diphosphate. The protein operates within amino-acid biosynthesis; S-adenosyl-L-methionine biosynthesis; S-adenosyl-L-methionine from L-methionine: step 1/1. In terms of biological role, catalyzes the formation of S-adenosylmethionine (AdoMet) from methionine and ATP. The overall synthetic reaction is composed of two sequential steps, AdoMet formation and the subsequent tripolyphosphate hydrolysis which occurs prior to release of AdoMet from the enzyme. This chain is S-adenosylmethionine synthase, found in Helicobacter acinonychis (strain Sheeba).